Here is a 320-residue protein sequence, read N- to C-terminus: Foldase protein PrsA (320 aa).

The first 20 residues, 1 to 20, serve as a signal peptide directing secretion; sequence MKMINKLIVPVTASALLLGA. Residue cysteine 21 is the site of N-palmitoyl cysteine attachment. Cysteine 21 carries the S-diacylglycerol cysteine lipid modification. A PpiC domain is found at 139–245; sequence EDSKKASHIL…FGYHIIKADK (107 aa). A disordered region spans residues 159-198; sequence EGLDDKEAKQKAEEIQKEVSKDPSKFGEIAKKESMDTGSA.

The protein belongs to the PrsA family.

Its subcellular location is the cell membrane. It carries out the reaction [protein]-peptidylproline (omega=180) = [protein]-peptidylproline (omega=0). Its function is as follows. Plays a major role in protein secretion by helping the post-translocational extracellular folding of several secreted proteins. The chain is Foldase protein PrsA from Staphylococcus aureus (strain bovine RF122 / ET3-1).